The sequence spans 313 residues: Homoserine O-acetyltransferase (313 aa).

Catalysis depends on Cys142, which acts as the Acyl-thioester intermediate. Substrate contacts are provided by Lys163 and Ser191. His234 (proton acceptor) is an active-site residue. The active site involves Glu236. Position 248 (Arg248) interacts with substrate.

Belongs to the MetA family.

The protein resides in the cytoplasm. The enzyme catalyses L-homoserine + acetyl-CoA = O-acetyl-L-homoserine + CoA. It participates in amino-acid biosynthesis; L-methionine biosynthesis via de novo pathway; O-acetyl-L-homoserine from L-homoserine: step 1/1. In terms of biological role, transfers an acetyl group from acetyl-CoA to L-homoserine, forming acetyl-L-homoserine. In Streptococcus sanguinis (strain SK36), this protein is Homoserine O-acetyltransferase.